The following is a 62-amino-acid chain: Large ribosomal subunit protein eL37 (62 aa).

4 residues coordinate Zn(2+): cysteine 20, cysteine 23, cysteine 35, and cysteine 38. The C4-type zinc-finger motif lies at 20–38; that stretch reads CRRCGRRAYHVRKGYCAAC.

The protein belongs to the eukaryotic ribosomal protein eL37 family. Zn(2+) is required as a cofactor.

Its function is as follows. Binds to the 23S rRNA. This is Large ribosomal subunit protein eL37 from Methanopyrus kandleri (strain AV19 / DSM 6324 / JCM 9639 / NBRC 100938).